The chain runs to 254 residues: tRNA (guanine-N(1)-)-methyltransferase (254 aa).

Residues Gly-117 and 136 to 141 each bind S-adenosyl-L-methionine; that span reads LGDFVL.

It belongs to the RNA methyltransferase TrmD family. Homodimer.

Its subcellular location is the cytoplasm. It carries out the reaction guanosine(37) in tRNA + S-adenosyl-L-methionine = N(1)-methylguanosine(37) in tRNA + S-adenosyl-L-homocysteine + H(+). Specifically methylates guanosine-37 in various tRNAs. This Levilactobacillus brevis (strain ATCC 367 / BCRC 12310 / CIP 105137 / JCM 1170 / LMG 11437 / NCIMB 947 / NCTC 947) (Lactobacillus brevis) protein is tRNA (guanine-N(1)-)-methyltransferase.